We begin with the raw amino-acid sequence, 232 residues long: Ribosomal RNA small subunit methyltransferase G (232 aa).

Residues glycine 75, phenylalanine 80, 126 to 127, and arginine 143 contribute to the S-adenosyl-L-methionine site; that span reads AE.

Belongs to the methyltransferase superfamily. RNA methyltransferase RsmG family.

The protein localises to the cytoplasm. In terms of biological role, specifically methylates the N7 position of a guanine in 16S rRNA. This chain is Ribosomal RNA small subunit methyltransferase G, found in Fusobacterium nucleatum subsp. nucleatum (strain ATCC 25586 / DSM 15643 / BCRC 10681 / CIP 101130 / JCM 8532 / KCTC 2640 / LMG 13131 / VPI 4355).